The primary structure comprises 31 residues: Cliotide T13 (31 aa).

Residues 1–31 constitute a cross-link (cyclopeptide (Asp-Asn)); the sequence is DTTPCGESCVWIPCVSSIVGCSCQNKVCYQN. 3 cysteine pairs are disulfide-bonded: Cys-5–Cys-21, Cys-9–Cys-23, and Cys-14–Cys-28.

In terms of processing, contains 3 disulfide bonds. This is a cyclic peptide. As to expression, expressed in seed but not in root nodules.

Its function is as follows. Probably participates in a plant defense mechanism. Not active against Gram-negative bacterium E.coli ATCC 700926 or Gram-positive bacterium S.aureus ATCC 12600 up to a concentration of 100 uM under low-salt conditions. In Clitoria ternatea (Butterfly pea), this protein is Cliotide T13.